Reading from the N-terminus, the 311-residue chain is Halocin-S8 (311 aa).

2 consecutive propeptides follow at residues 1–230 (MSDK…IQLQ) and 267–311 (TVAC…TSFW).

The protein resides in the secreted. Has antibacterial activity against the haloarchaeons H.salinarium NRC817, Halobacterium GRB and H.gibbonsii. This chain is Halocin-S8 (halS8), found in Haloarchaeon S8a.